The sequence spans 302 residues: Pantothenate synthetase (302 aa).

30–37 (MGALHGGH) lines the ATP pocket. The Proton donor role is filled by His37. Gln61 contacts (R)-pantoate. Gln61 provides a ligand contact to beta-alanine. 147–150 (GEKD) contributes to the ATP binding site. A (R)-pantoate-binding site is contributed by Gln153. ATP is bound by residues Val176 and 184-187 (KSSR).

It belongs to the pantothenate synthetase family. Homodimer.

It localises to the cytoplasm. The catalysed reaction is (R)-pantoate + beta-alanine + ATP = (R)-pantothenate + AMP + diphosphate + H(+). Its pathway is cofactor biosynthesis; (R)-pantothenate biosynthesis; (R)-pantothenate from (R)-pantoate and beta-alanine: step 1/1. In terms of biological role, catalyzes the condensation of pantoate with beta-alanine in an ATP-dependent reaction via a pantoyl-adenylate intermediate. The chain is Pantothenate synthetase from Shouchella clausii (strain KSM-K16) (Alkalihalobacillus clausii).